A 167-amino-acid chain; its full sequence is Ubiquitin-conjugating enzyme E2 14 (167 aa).

A2 bears the N-acetylalanine mark. Positions 5 to 165 constitute a UBC core domain; that stretch reads QASLLLQKQL…VSRCVRRSQE (161 aa). C90 (glycyl thioester intermediate) is an active-site residue.

Belongs to the ubiquitin-conjugating enzyme family.

It catalyses the reaction S-ubiquitinyl-[E1 ubiquitin-activating enzyme]-L-cysteine + [E2 ubiquitin-conjugating enzyme]-L-cysteine = [E1 ubiquitin-activating enzyme]-L-cysteine + S-ubiquitinyl-[E2 ubiquitin-conjugating enzyme]-L-cysteine.. It participates in protein modification; protein ubiquitination. Accepts the ubiquitin from the E1 complex and catalyzes its covalent attachment to other proteins. Involved in the formation of multiubiquitin chains. Signal the protein for selective degradation. The sequence is that of Ubiquitin-conjugating enzyme E2 14 (UBC14) from Arabidopsis thaliana (Mouse-ear cress).